Consider the following 255-residue polypeptide: uncharacterized protein (255 aa).

The signal sequence occupies residues 1–18 (MRILIILSIILCSLFTKA).

Belongs to the MlaA family.

This is an uncharacterized protein from Rickettsia bellii (strain RML369-C).